Here is a 348-residue protein sequence, read N- to C-terminus: Dihydroorotase (348 aa).

2 residues coordinate Zn(2+): His17 and His19. Substrate-binding positions include 19 to 21 and Asn45; that span reads HLR. The Zn(2+) site is built by Lys103, His140, and His178. At Lys103 the chain carries N6-carboxylysine. His140 contacts substrate. A substrate-binding site is contributed by Leu223. Asp251 provides a ligand contact to Zn(2+). The active site involves Asp251. Residues His255 and Ala267 each coordinate substrate.

It belongs to the metallo-dependent hydrolases superfamily. DHOase family. Class II DHOase subfamily. In terms of assembly, homodimer. Requires Zn(2+) as cofactor.

It catalyses the reaction (S)-dihydroorotate + H2O = N-carbamoyl-L-aspartate + H(+). It functions in the pathway pyrimidine metabolism; UMP biosynthesis via de novo pathway; (S)-dihydroorotate from bicarbonate: step 3/3. Its function is as follows. Catalyzes the reversible cyclization of carbamoyl aspartate to dihydroorotate. In Escherichia coli O6:K15:H31 (strain 536 / UPEC), this protein is Dihydroorotase.